A 386-amino-acid polypeptide reads, in one-letter code: Terpene cyclase 6 (386 aa).

The Mg(2+) site is built by Asp128, Asn276, and Ser280. A D(D/E)XX(D/E) motif motif is present at residues Asp128–Asp132. The NSE motif signature appears at Asn276–Glu284. The short motif at Trp360–Tyr367 is the WxxxxxRY motif element. (2E,6E)-farnesyl diphosphate is bound by residues Arg366 and Tyr367.

It belongs to the terpene synthase family. Homodimer. Requires Mg(2+) as cofactor.

It carries out the reaction (2E,6E)-farnesyl diphosphate + H2O = trichobrasilenol + diphosphate. The catalysed reaction is (2E,6E)-farnesyl diphosphate = alpha-humulene + diphosphate. It catalyses the reaction (2E,6E)-farnesyl diphosphate = (-)-(E)-beta-caryophyllene + diphosphate. The enzyme catalyses (2E,6E)-farnesyl diphosphate = (E)-2-epi-beta-caryophyllene + diphosphate. It carries out the reaction (2E,6E)-farnesyl diphosphate + H2O = (+)-isoafricanol + diphosphate. The catalysed reaction is (2E,6E)-farnesyl diphosphate + H2O = (+)-(2S,3R,9R)-pristinol + diphosphate. It catalyses the reaction (2E,6E)-farnesyl diphosphate = african-3-ene + diphosphate. The enzyme catalyses (2E,6E)-farnesyl diphosphate = african-1-ene + diphosphate. The protein operates within sesquiterpene biosynthesis. Functionally, terpene cyclase that is able to convert FPP into a mixture of sesquiterpene hydrocarbons and alcohols. The main product is trichobrasilenol. Additionally, side products include alpha-humulene, caryophyllene, 2-epi-caryophyllene, african-3-ene, african-1-ene, isoafricanol and pristinol. Does not accept GPP, GGPP, and GFPP as substrates. The chain is Terpene cyclase 6 from Hypocrea atroviridis (Trichoderma atroviride).